The following is a 413-amino-acid chain: Protein cycle (413 aa).

A disordered region spans residues 1 to 43; the sequence is MEVQEFCENMEEIEDENYDEEKSARTSDENRKQNHSEIEKRRR. Positions 8–19 are enriched in acidic residues; the sequence is ENMEEIEDENYD. A compositionally biased stretch (basic and acidic residues) spans 20–41; the sequence is EEKSARTSDENRKQNHSEIEKR. Positions 30 to 83 constitute a bHLH domain; it reads NRKQNHSEIEKRRRDKMNTYINELSSMIPMCFAMQRKLDKLTVLRMAVQHLRGI. Positions 104–175 constitute a PAS 1 domain; it reads DQELKMIILQ…EQLSSLEQCP (72 aa). The segment at 219–242 is disordered; it reads NQIKEESDTSSSSRSSTKRKSRLT. The PAS 2 domain maps to 297 to 367; the sequence is PASLDNHPNI…ESHKMVMQVP (71 aa). Positions 372 to 413 constitute a PAC domain; it reads TQVYRFRCKDNSYIQLQSEWRAFKNPWTSEIDYIIAKNSVFL.

In terms of assembly, efficient DNA binding requires dimerization with another bHLH protein. Forms a heterodimer with Clock in order to activate PER and TIM transcription. As to expression, expressed in head and ovary.

It localises to the nucleus. Putative transcription factor involved in the generation of biological rhythms. Activates cycling transcription of Period (PER) and Timeless (TIM) by binding to the E-box (5'-CACGTG-3') present in their promoters. The polypeptide is Protein cycle (cyc) (Drosophila melanogaster (Fruit fly)).